Here is a 488-residue protein sequence, read N- to C-terminus: Lysine--tRNA ligase (488 aa).

Mg(2+) contacts are provided by E397 and E404.

It belongs to the class-II aminoacyl-tRNA synthetase family. In terms of assembly, homodimer. Mg(2+) is required as a cofactor.

The protein resides in the cytoplasm. It carries out the reaction tRNA(Lys) + L-lysine + ATP = L-lysyl-tRNA(Lys) + AMP + diphosphate. The chain is Lysine--tRNA ligase (lysS) from Mycoplasmopsis fermentans (strain ATCC 19989 / NBRC 14854 / NCTC 10117 / PG18) (Mycoplasma fermentans).